Here is a 159-residue protein sequence, read N- to C-terminus: Cyclic pyranopterin monophosphate synthase (159 aa).

Residues 75–77 (LCH) and 113–114 (ME) contribute to the substrate site. Residue D128 is part of the active site.

This sequence belongs to the MoaC family. In terms of assembly, homohexamer; trimer of dimers.

It catalyses the reaction (8S)-3',8-cyclo-7,8-dihydroguanosine 5'-triphosphate = cyclic pyranopterin phosphate + diphosphate. It participates in cofactor biosynthesis; molybdopterin biosynthesis. In terms of biological role, catalyzes the conversion of (8S)-3',8-cyclo-7,8-dihydroguanosine 5'-triphosphate to cyclic pyranopterin monophosphate (cPMP). This chain is Cyclic pyranopterin monophosphate synthase, found in Thiobacillus denitrificans (strain ATCC 25259 / T1).